The primary structure comprises 162 residues: Phosphopantetheine adenylyltransferase (162 aa).

Threonine 9 lines the substrate pocket. Residues 9–10 (TF) and histidine 17 contribute to the ATP site. Residues lysine 41, leucine 73, and arginine 87 each coordinate substrate. Residues 88–90 (GLR), glutamate 98, and 123–129 (FAFLSST) each bind ATP.

This sequence belongs to the bacterial CoaD family. In terms of assembly, homohexamer. The cofactor is Mg(2+).

Its subcellular location is the cytoplasm. The catalysed reaction is (R)-4'-phosphopantetheine + ATP + H(+) = 3'-dephospho-CoA + diphosphate. The protein operates within cofactor biosynthesis; coenzyme A biosynthesis; CoA from (R)-pantothenate: step 4/5. In terms of biological role, reversibly transfers an adenylyl group from ATP to 4'-phosphopantetheine, yielding dephospho-CoA (dPCoA) and pyrophosphate. This is Phosphopantetheine adenylyltransferase from Vibrio atlanticus (strain LGP32) (Vibrio splendidus (strain Mel32)).